Here is a 224-residue protein sequence, read N- to C-terminus: Ribose-5-phosphate isomerase A (224 aa).

Residues Thr32–Thr35, Asp85–Asp88, and Lys98–Gly101 each bind substrate. Glu107 functions as the Proton acceptor in the catalytic mechanism. Lys125 provides a ligand contact to substrate.

It belongs to the ribose 5-phosphate isomerase family. In terms of assembly, homodimer.

It catalyses the reaction aldehydo-D-ribose 5-phosphate = D-ribulose 5-phosphate. It participates in carbohydrate degradation; pentose phosphate pathway; D-ribose 5-phosphate from D-ribulose 5-phosphate (non-oxidative stage): step 1/1. Its function is as follows. Catalyzes the reversible conversion of ribose-5-phosphate to ribulose 5-phosphate. This Pseudomonas putida (strain GB-1) protein is Ribose-5-phosphate isomerase A.